We begin with the raw amino-acid sequence, 88 residues long: Homeobox protein knotted-1-like 3 (88 aa).

The 21-residue stretch at 4–24 (ELKKQLLRKYSGCLGNLRKEL) folds into the ELK domain. A DNA-binding region (homeobox; TALE-type) is located at residues 25–88 (CKKRKKDKLP…NQRKRHWKPS (64 aa)).

Belongs to the TALE/KNOX homeobox family. As to expression, strongly expressed in ear inflorescence primordia and shoot meristem. Weakly expressed in embryos. Absent from leaves.

Its subcellular location is the nucleus. Functionally, probably binds to the DNA sequence 5'-TGAC-3'. This is Homeobox protein knotted-1-like 3 (KNOX3) from Zea mays (Maize).